Consider the following 830-residue polypeptide: DNA helicase MCM8 (830 aa).

In terms of domain architecture, MCM spans 392–599 (LLKLIVNSLC…QHDHLLSEHV (208 aa)). Residue 444 to 451 (GDPGLGKS) participates in ATP binding. Serine 620 is subject to Phosphoserine.

Belongs to the MCM family. Component of the MCM8-MCM9 complex, which forms a hexamer composed of MCM8 and MCM9. Interacts with the DNA mismatch repair (MMR) complex composed at least of MSH2, MSH3, MSH6, PMS1 and MLH1. Interacts with RAD51; the interaction recruits RAD51 to DNA damage sites. Interacts with the MRN complex composed of MRE11, RAD50 and NBN/NBS1. Interacts with CDC6 and ORC2. Interacts with HROB; the interaction recruits the MCM8-MCM9 complex to DNA damage sites.

Its subcellular location is the nucleus. The protein resides in the chromosome. The enzyme catalyses ATP + H2O = ADP + phosphate + H(+). In terms of biological role, component of the MCM8-MCM9 complex, a complex involved in the repair of double-stranded DNA breaks (DBSs) and DNA interstrand cross-links (ICLs) by homologous recombination (HR). Required for DNA resection by the MRE11-RAD50-NBN/NBS1 (MRN) complex by recruiting the MRN complex to the repair site and by promoting the complex nuclease activity. Probably by regulating the localization of the MNR complex, indirectly regulates the recruitment of downstream effector RAD51 to DNA damage sites including DBSs and ICLs. The MCM8-MCM9 complex is dispensable for DNA replication and S phase progression. However, may play a non-essential for DNA replication: may be involved in the activation of the prereplicative complex (pre-RC) during G(1) phase by recruiting CDC6 to the origin recognition complex (ORC). Probably by regulating HR, plays a key role during gametogenesis. Stabilizes MCM9 protein. In Rattus norvegicus (Rat), this protein is DNA helicase MCM8 (Mcm8).